The chain runs to 503 residues: AMP phosphorylase (503 aa).

Residues glycine 168, 194 to 199 (SRAITS), and threonine 203 contribute to the AMP site. Aspartate 256 acts as the Proton donor in catalysis. AMP-binding residues include serine 264 and lysine 288.

The protein belongs to the thymidine/pyrimidine-nucleoside phosphorylase family. Type 2 subfamily.

It carries out the reaction AMP + phosphate = alpha-D-ribose 1,5-bisphosphate + adenine. It catalyses the reaction CMP + phosphate = cytosine + alpha-D-ribose 1,5-bisphosphate. The enzyme catalyses UMP + phosphate = alpha-D-ribose 1,5-bisphosphate + uracil. Catalyzes the conversion of AMP and phosphate to adenine and ribose 1,5-bisphosphate (R15P). Exhibits phosphorylase activity toward CMP and UMP in addition to AMP. Functions in an archaeal AMP degradation pathway, together with R15P isomerase and RubisCO. The polypeptide is AMP phosphorylase (Methanocaldococcus jannaschii (strain ATCC 43067 / DSM 2661 / JAL-1 / JCM 10045 / NBRC 100440) (Methanococcus jannaschii)).